Reading from the N-terminus, the 164-residue chain is Lipoprotein signal peptidase (164 aa).

Helical transmembrane passes span Phe12 to Ala32, Trp70 to Thr90, and Gln93 to Phe113. Catalysis depends on residues Asp123 and Asp141. A helical membrane pass occupies residues Tyr133–Ile153.

Belongs to the peptidase A8 family.

It localises to the cell inner membrane. It catalyses the reaction Release of signal peptides from bacterial membrane prolipoproteins. Hydrolyzes -Xaa-Yaa-Zaa-|-(S,diacylglyceryl)Cys-, in which Xaa is hydrophobic (preferably Leu), and Yaa (Ala or Ser) and Zaa (Gly or Ala) have small, neutral side chains.. The protein operates within protein modification; lipoprotein biosynthesis (signal peptide cleavage). In terms of biological role, this protein specifically catalyzes the removal of signal peptides from prolipoproteins. In Pseudoalteromonas atlantica (strain T6c / ATCC BAA-1087), this protein is Lipoprotein signal peptidase.